A 498-amino-acid chain; its full sequence is Acetylcholine receptor subunit alpha-type acr-16 (498 aa).

The signal sequence occupies residues 1-19 (MSVCTLLISCAILAAPTLG). At 20–230 (SLQERRLYED…FYLHMRRRTL (211 aa)) the chain is on the extracellular side. N-linked (GlcNAc...) asparagine glycans are attached at residues asparagine 43 and asparagine 93. Intrachain disulfides connect cysteine 147-cysteine 161 and cysteine 211-cysteine 212. The next 3 membrane-spanning stretches (helical) occupy residues 231 to 252 (YYGF…LGFT), 261 to 279 (ITLQ…SIVS), and 295 to 314 (FFTC…VYVL). At 315–472 (NLHYRTPETH…WKFAAMVVDR (158 aa)) the chain is on the cytoplasmic side. A helical transmembrane segment spans residues 473 to 493 (LCLYVFTIFIIVSTIGIFWSA).

Belongs to the ligand-gated ion channel (TC 1.A.9) family. Acetylcholine receptor (TC 1.A.9.1) subfamily. Expressed in the body wall muscle.

The protein resides in the postsynaptic cell membrane. Its subcellular location is the cell membrane. After binding acetylcholine, the AChR responds by an extensive change in conformation that affects all subunits and leads to opening of an ion-conducting channel across the plasma membrane. A subunit of the levamisole-insensitive nicotinic receptor. This is Acetylcholine receptor subunit alpha-type acr-16 (acr-16) from Caenorhabditis elegans.